The sequence spans 355 residues: Uroporphyrinogen decarboxylase (355 aa).

Residues 27 to 31 (RQAGR), Asp-77, Tyr-154, Thr-209, and His-328 each bind substrate.

The protein belongs to the uroporphyrinogen decarboxylase family. As to quaternary structure, homodimer.

Its subcellular location is the cytoplasm. The enzyme catalyses uroporphyrinogen III + 4 H(+) = coproporphyrinogen III + 4 CO2. Its pathway is porphyrin-containing compound metabolism; protoporphyrin-IX biosynthesis; coproporphyrinogen-III from 5-aminolevulinate: step 4/4. Functionally, catalyzes the decarboxylation of four acetate groups of uroporphyrinogen-III to yield coproporphyrinogen-III. The protein is Uroporphyrinogen decarboxylase of Vibrio cholerae serotype O1 (strain ATCC 39541 / Classical Ogawa 395 / O395).